The sequence spans 142 residues: Succinate dehydrogenase subunit 6, mitochondrial (142 aa).

At G2 the chain carries N-acetylglycine.

Component of complex II composed of eight subunits in plants: four classical SDH subunits SDH1, SDH2, SDH3 and SDH4 (a flavoprotein (FP), an iron-sulfur protein (IP), and a cytochrome b composed of a large and a small subunit.), as well as four subunits unknown in mitochondria from bacteria and heterotrophic eukaryotes.

Its subcellular location is the mitochondrion inner membrane. It participates in carbohydrate metabolism; tricarboxylic acid cycle. This chain is Succinate dehydrogenase subunit 6, mitochondrial, found in Arabidopsis thaliana (Mouse-ear cress).